We begin with the raw amino-acid sequence, 316 residues long: BTB/POZ domain-containing protein Y57A10B.3 (316 aa).

A signal peptide spans 1–21; it reads MSAMRRCTCFIICLLTSYTYG. Asn-91, Asn-107, Asn-118, Asn-133, Asn-191, and Asn-260 each carry an N-linked (GlcNAc...) asparagine glycan. Residues 158 to 226 enclose the BTB domain; it reads RDAVLIVEGK…VHSTATFPND (69 aa).

Its subcellular location is the secreted. In Caenorhabditis elegans, this protein is BTB/POZ domain-containing protein Y57A10B.3 (btb-14).